The following is a 587-amino-acid chain: Phosphatidylinositol-3-phosphatase SAC1 (587 aa).

Residues 1–520 (MAATTYERLK…SPLSVPRDLK (520 aa)) lie on the Cytoplasmic side of the membrane. Positions 122–451 (MNHVLSMDGF…ANACAKQYAG (330 aa)) constitute an SAC domain. Residues 452-587 (TGALKTDFTR…PRLVQKEKID (136 aa)) are essential for phosphatidylinositol-4-phosphate phosphatase activity. At Lys456 the chain carries N6-acetyllysine. The helical transmembrane segment at 521–541 (FLALPIIMVVAFSMCIICLLM) threads the bilayer. Topologically, residues 542–548 (AGDTWTE) are lumenal. The helical transmembrane segment at 549-569 (TLAYVLFWGVASIGTFFIILY) threads the bilayer. Topologically, residues 570-587 (NGKDFVDAPRLVQKEKID) are cytoplasmic.

In terms of assembly, interacts with TMEM39A. Interacts with SEC23A and SEC24A; this interaction is reduced in the absence of TMEM39A. Interacts with PLEKHA3 and VAPA and/or VAPB to form a ternary complex.

The protein localises to the endoplasmic reticulum membrane. Its subcellular location is the golgi apparatus membrane. It catalyses the reaction a 1,2-diacyl-sn-glycero-3-phospho-(1D-myo-inositol-3-phosphate) + H2O = a 1,2-diacyl-sn-glycero-3-phospho-(1D-myo-inositol) + phosphate. It carries out the reaction a 1,2-diacyl-sn-glycero-3-phospho-(1D-myo-inositol 4-phosphate) + H2O = a 1,2-diacyl-sn-glycero-3-phospho-(1D-myo-inositol) + phosphate. Functionally, phosphoinositide phosphatase which catalyzes the hydrolysis of phosphatidylinositol 4-phosphate (PtdIns(4)P), phosphatidylinositol 3-phosphate (PtdIns(3)P) and has low activity towards phosphatidylinositol-3,5-bisphosphate (PtdIns(3,5)P2). Shows a very robust PtdIns(4)P phosphatase activity when it binds PtdIns(4)P in a 'cis' configuration in the cellular environment, with much less activity seen when it binds PtdIns(4)P in 'trans' configuration. PtdIns(4)P phosphatase activity (when it binds PtdIns(4)P in 'trans' configuration) is enhanced in the presence of PLEKHA3. The sequence is that of Phosphatidylinositol-3-phosphatase SAC1 (SACM1L) from Bos taurus (Bovine).